Reading from the N-terminus, the 326-residue chain is MSFLSGFFGPICEIEVVLNDADTRKVSEIKTEEGKVEKHFLFYDGESVAGKVNIVFRQPGKRLEHQGIRIEFVGQIELFNDKSNTHEFVNLVKELALPGELTQSRNYDFEFMQVEKPYESYIGANVRLRYFLKVTIVRRLTDLVKEYDLIVHQLATYPDVNNSIKMEVGIEDCLHIEFEYNKSKYHLKDVIVGKIYFLLVRIKIQHMELQLIKKEITGIGPSTTTETETVAKYEIMDGAPVKGESIPIRLFLAGYDPTPTMRDVNKKFSVRYFLNLVLVDEEDRRYFKQQEIILWRKAPEKIRKRTNFHQRFEPQEPQASAEEPEI.

Belongs to the VPS26 family. As to quaternary structure, component of the heterotrimeric retromer cargo-selective complex (CSC) which is believed to associate with variable sorting nexins to form functionally distinct retromer complex variants.

Its subcellular location is the cytoplasm. The protein resides in the endosome membrane. The protein localises to the early endosome. Its function is as follows. Acts as a component of the retromer cargo-selective complex (CSC). The CSC is believed to be the core functional component of retromer or respective retromer complex variants acting to prevent missorting of selected transmembrane cargo proteins into the lysosomal degradation pathway. Retromer mediates retrograde transport of cargo proteins from endosomes to the trans-Golgi network (TGN). This is Vacuolar protein sorting-associated protein 26A (vps26a) from Xenopus tropicalis (Western clawed frog).